Consider the following 437-residue polypeptide: Phosphomethylpyrimidine synthase (437 aa).

Substrate-binding positions include Asn-69, Met-98, Tyr-127, His-163, Ser-185–Gly-187, Asp-226–Arg-229, and Glu-265. His-269 serves as a coordination point for Zn(2+). Tyr-292 lines the substrate pocket. His-333 contacts Zn(2+). Cys-409, Cys-412, and Cys-416 together coordinate [4Fe-4S] cluster.

It belongs to the ThiC family. The cofactor is [4Fe-4S] cluster.

It carries out the reaction 5-amino-1-(5-phospho-beta-D-ribosyl)imidazole + S-adenosyl-L-methionine = 4-amino-2-methyl-5-(phosphooxymethyl)pyrimidine + CO + 5'-deoxyadenosine + formate + L-methionine + 3 H(+). It participates in cofactor biosynthesis; thiamine diphosphate biosynthesis. In terms of biological role, catalyzes the synthesis of the hydroxymethylpyrimidine phosphate (HMP-P) moiety of thiamine from aminoimidazole ribotide (AIR) in a radical S-adenosyl-L-methionine (SAM)-dependent reaction. The sequence is that of Phosphomethylpyrimidine synthase from Clostridium botulinum (strain ATCC 19397 / Type A).